Consider the following 166-residue polypeptide: Transcription antitermination protein NusB (166 aa).

Residues 1-18 (MISDESDRFNPRDPKPAD) are compositionally biased toward basic and acidic residues. Residues 1–30 (MISDESDRFNPRDPKPADAGKPSKSAKRRE) form a disordered region.

This sequence belongs to the NusB family.

In terms of biological role, involved in transcription antitermination. Required for transcription of ribosomal RNA (rRNA) genes. Binds specifically to the boxA antiterminator sequence of the ribosomal RNA (rrn) operons. This chain is Transcription antitermination protein NusB, found in Pseudomonas entomophila (strain L48).